Reading from the N-terminus, the 264-residue chain is RNA-binding protein pos-1 (264 aa).

Residues 56-82 (QDKETQNSASQPTSEQSLANRDPCTVP) form a disordered region. Positions 61 to 74 (QNSASQPTSEQSLA) are enriched in polar residues. 2 consecutive C3H1-type zinc fingers follow at residues 98 to 126 (AFKT…HGVH) and 141 to 169 (KYKT…HKIV). The Zn(2+) site is built by cysteine 104, cysteine 113, cysteine 119, histidine 123, cysteine 147, cysteine 156, cysteine 162, and histidine 166.

Monomer.

It is found in the cytoplasm. RNA-binding protein that coordinates cell fate specification and differentiation during early embryogenesis. Binds to a consensus pos-1 recognition element (PRE) consisting of the sequence 5'-UA(U 2-3)RGD(N 1-3)G-3', where R is any purine, D is A, G, or U, and N is any base. The PRE motif is found within the 3' untranslated region of many maternal transcripts required for early development. Binds to the 3' untranslated region (UTR) of Notch receptor homolog glp-1, thereby repressing glp-1 translation in the posterior blastomeres in the embryo. Binding to glp-1 3' UTR excludes cell fate regulator gld-1 binding to an overlapping binding site in the glp-1 3' UTR. Binds to the neg-1 3'UTR thereby opposing neg-1 expression and cytoplasmic polyadenylation of the neg-1 mRNA poly(A) tail promoted by gld-2 and gld-3. By inhibiting the cytoplasmic lengthening of neg-1 mRNA, restricts the accumulation of neg-1 protein and promotes endo-mesoderm development in anterior blastomeres. Essential for germline specification. The protein is RNA-binding protein pos-1 of Caenorhabditis elegans.